The following is a 255-amino-acid chain: MWIGIISLFPEMFRAITDYGVTGRAVKNGLLSIQSWSPRDFTHDRHRIVDDRPYGGGPGMLMMVQPLRDAIHAAKAAAGEGAKVIYLSPQGRKLDQAGVSELATNQKLILVCGRYEGIDERVIQTEIDEEWSIGDYVLSGGELPAMTLIDSVSRFIPGVLGHEASATEDSFAEGLLDCPHYTRPEVLEGMEVPPVLLSGNHAEIRRWRLKQSLGRTWLRRPELLENLALTEEQARLLAEFKTEHAQQQHKHDGMA.

S-adenosyl-L-methionine is bound by residues glycine 113 and 133–138 (IGDYVL).

This sequence belongs to the RNA methyltransferase TrmD family. In terms of assembly, homodimer.

The protein resides in the cytoplasm. The catalysed reaction is guanosine(37) in tRNA + S-adenosyl-L-methionine = N(1)-methylguanosine(37) in tRNA + S-adenosyl-L-homocysteine + H(+). Functionally, specifically methylates guanosine-37 in various tRNAs. The sequence is that of tRNA (guanine-N(1)-)-methyltransferase from Escherichia coli O81 (strain ED1a).